Reading from the N-terminus, the 256-residue chain is Hydroxyacylglutathione hydrolase (256 aa).

Residues H54, H56, D58, H59, H113, D136, and H174 each coordinate Zn(2+).

The protein belongs to the metallo-beta-lactamase superfamily. Glyoxalase II family. In terms of assembly, monomer. The cofactor is Zn(2+).

The catalysed reaction is an S-(2-hydroxyacyl)glutathione + H2O = a 2-hydroxy carboxylate + glutathione + H(+). The protein operates within secondary metabolite metabolism; methylglyoxal degradation; (R)-lactate from methylglyoxal: step 2/2. Functionally, thiolesterase that catalyzes the hydrolysis of S-D-lactoyl-glutathione to form glutathione and D-lactic acid. In Cyanothece sp. (strain PCC 7425 / ATCC 29141), this protein is Hydroxyacylglutathione hydrolase.